The sequence spans 359 residues: 3-dehydroquinate synthase (359 aa).

NAD(+)-binding positions include 70-75 (DAEGGK), 104-108 (GAATD), 128-129 (TT), Lys-141, and Lys-150. Residues Glu-183, His-246, and His-262 each coordinate Zn(2+).

It belongs to the sugar phosphate cyclases superfamily. Dehydroquinate synthase family. Requires Co(2+) as cofactor. Zn(2+) is required as a cofactor. The cofactor is NAD(+).

It is found in the cytoplasm. It carries out the reaction 7-phospho-2-dehydro-3-deoxy-D-arabino-heptonate = 3-dehydroquinate + phosphate. It participates in metabolic intermediate biosynthesis; chorismate biosynthesis; chorismate from D-erythrose 4-phosphate and phosphoenolpyruvate: step 2/7. Functionally, catalyzes the conversion of 3-deoxy-D-arabino-heptulosonate 7-phosphate (DAHP) to dehydroquinate (DHQ). The chain is 3-dehydroquinate synthase from Mycolicibacterium vanbaalenii (strain DSM 7251 / JCM 13017 / BCRC 16820 / KCTC 9966 / NRRL B-24157 / PYR-1) (Mycobacterium vanbaalenii).